The primary structure comprises 477 residues: MSPQTETKASVGFKAGVKEYKLTYYTPEYETKDTDILAAFRVTPQPGVPPEEAGAAVAAESSTGTWTTVWTDGLTSLDRYKGRCYHIEPVPGEADQYICYVAYPLDLFEEGSVTNMFTSIVGNVFGFKALRALRLEDLRIPVAYVKTFQGPPHGIQVERDKLNKYGRPLLGCTIKPKLGLSAKNYGRACYECLRGGLDFTKDDENVNSQPFMRWRDRFLFCAEAIYKSQAETGEIKGHYLNATAGTCEEMMKRAVFARELGVPIIMHDYLTGGFTANTSLAHYCRDNGLLLHIHRAMHAVIDRQKNHGIHFRVLAKALRMSGGDHIHSGTVVGKLEGEREITLGFVDLLRDDFIEKDRSRGIYFTQDWVSLPGVIPVASGGIHVWHMPALTEIFGDDSVLQFGGGTLGHPWGNAPGAVANRVALEACVKARNEGRDLAQEGNEIIREACKWSPELAAACEVWKEIVFNFAAVDVLDK.

The propeptide occupies methionine 1–serine 2. Position 3 is an N-acetylproline (proline 3). Lysine 14 is modified (N6,N6,N6-trimethyllysine). Substrate is bound by residues asparagine 123 and threonine 173. Lysine 175 serves as the catalytic Proton acceptor. Position 177 (lysine 177) interacts with substrate. Mg(2+) is bound by residues lysine 201, aspartate 203, and glutamate 204. The residue at position 201 (lysine 201) is an N6-carboxylysine. Histidine 294 acts as the Proton acceptor in catalysis. Substrate-binding residues include arginine 295, histidine 327, and serine 379.

The protein belongs to the RuBisCO large chain family. Type I subfamily. As to quaternary structure, heterohexadecamer of 8 large chains and 8 small chains; disulfide-linked. The disulfide link is formed within the large subunit homodimers. Mg(2+) serves as cofactor. Post-translationally, the disulfide bond which can form in the large chain dimeric partners within the hexadecamer appears to be associated with oxidative stress and protein turnover.

It localises to the plastid. It is found in the chloroplast. The enzyme catalyses 2 (2R)-3-phosphoglycerate + 2 H(+) = D-ribulose 1,5-bisphosphate + CO2 + H2O. The catalysed reaction is D-ribulose 1,5-bisphosphate + O2 = 2-phosphoglycolate + (2R)-3-phosphoglycerate + 2 H(+). Its function is as follows. RuBisCO catalyzes two reactions: the carboxylation of D-ribulose 1,5-bisphosphate, the primary event in carbon dioxide fixation, as well as the oxidative fragmentation of the pentose substrate in the photorespiration process. Both reactions occur simultaneously and in competition at the same active site. The polypeptide is Ribulose bisphosphate carboxylase large chain (Digitalis purpurea (Common foxglove)).